We begin with the raw amino-acid sequence, 192 residues long: MNNKIIEALIYIQGEEGLSSEQLQKVLKSESISSARALLKVFKEKWNNEQHGIKVEEFNDVYKFATIKDVKDYVSELVTIIKKQRLSNAAIEVAGIVAYKQPISKSQINKIRGVASEIVVNTLLIKGIIEEVGIAQTPGNPILYGVTAKFYDYFKIKSLHELPNLKEFDDTGEYESIEDFDLYSSQREDQDE.

The protein belongs to the ScpB family. In terms of assembly, homodimer. Homodimerization may be required to stabilize the binding of ScpA to the Smc head domains. Component of a cohesin-like complex composed of ScpA, ScpB and the Smc homodimer, in which ScpA and ScpB bind to the head domain of Smc. The presence of the three proteins is required for the association of the complex with DNA.

The protein localises to the cytoplasm. Participates in chromosomal partition during cell division. May act via the formation of a condensin-like complex containing Smc and ScpA that pull DNA away from mid-cell into both cell halves. The polypeptide is Segregation and condensation protein B (Mycoplasma mobile (strain ATCC 43663 / 163K / NCTC 11711) (Mesomycoplasma mobile)).